The following is a 209-amino-acid chain: Orotate phosphoribosyltransferase (209 aa).

Residues Arg-96, Lys-100, His-102, and 122–130 (EDLISTGKS) each bind 5-phospho-alpha-D-ribose 1-diphosphate. Ser-126 contributes to the orotate binding site.

It belongs to the purine/pyrimidine phosphoribosyltransferase family. PyrE subfamily. In terms of assembly, homodimer. Requires Mg(2+) as cofactor.

It carries out the reaction orotidine 5'-phosphate + diphosphate = orotate + 5-phospho-alpha-D-ribose 1-diphosphate. It functions in the pathway pyrimidine metabolism; UMP biosynthesis via de novo pathway; UMP from orotate: step 1/2. Catalyzes the transfer of a ribosyl phosphate group from 5-phosphoribose 1-diphosphate to orotate, leading to the formation of orotidine monophosphate (OMP). In Coxiella burnetii (strain RSA 493 / Nine Mile phase I), this protein is Orotate phosphoribosyltransferase.